Reading from the N-terminus, the 142-residue chain is Translation initiation factor 2 subunit beta (142 aa).

The protein belongs to the eIF-2-beta/eIF-5 family. In terms of assembly, heterotrimer composed of an alpha, a beta and a gamma chain.

In terms of biological role, eIF-2 functions in the early steps of protein synthesis by forming a ternary complex with GTP and initiator tRNA. In Staphylothermus marinus (strain ATCC 43588 / DSM 3639 / JCM 9404 / F1), this protein is Translation initiation factor 2 subunit beta.